The sequence spans 295 residues: Hydroxyquinol 1,2-dioxygenase (295 aa).

Residues Tyr165, Tyr200, His224, and His226 each contribute to the Fe cation site.

It belongs to the intradiol ring-cleavage dioxygenase family. The cofactor is Fe(3+).

It carries out the reaction benzene-1,2,4-triol + O2 = maleylacetate + 2 H(+). It functions in the pathway aromatic compound metabolism. Its function is as follows. Involved in the gamma-resorcylate (2,6-dihydroxybenzoate) catabolism. Catalyzes the conversion of hydroxyquinol to malelylacetate. This is Hydroxyquinol 1,2-dioxygenase from Rhizobium sp. (strain MTP-10005).